The following is a 305-amino-acid chain: Coenzyme PQQ synthesis protein B (305 aa).

This sequence belongs to the PqqB family.

It participates in cofactor biosynthesis; pyrroloquinoline quinone biosynthesis. In terms of biological role, may be involved in the transport of PQQ or its precursor to the periplasm. This Cupriavidus necator (strain ATCC 17699 / DSM 428 / KCTC 22496 / NCIMB 10442 / H16 / Stanier 337) (Ralstonia eutropha) protein is Coenzyme PQQ synthesis protein B.